The chain runs to 153 residues: D-aminoacyl-tRNA deacylase (153 aa).

A Gly-cisPro motif, important for rejection of L-amino acids motif is present at residues 137–138 (GP).

It belongs to the DTD family. In terms of assembly, homodimer.

Its subcellular location is the cytoplasm. It carries out the reaction glycyl-tRNA(Ala) + H2O = tRNA(Ala) + glycine + H(+). It catalyses the reaction a D-aminoacyl-tRNA + H2O = a tRNA + a D-alpha-amino acid + H(+). Its function is as follows. An aminoacyl-tRNA editing enzyme that deacylates mischarged D-aminoacyl-tRNAs. Also deacylates mischarged glycyl-tRNA(Ala), protecting cells against glycine mischarging by AlaRS. Acts via tRNA-based rather than protein-based catalysis; rejects L-amino acids rather than detecting D-amino acids in the active site. By recycling D-aminoacyl-tRNA to D-amino acids and free tRNA molecules, this enzyme counteracts the toxicity associated with the formation of D-aminoacyl-tRNA entities in vivo and helps enforce protein L-homochirality. This Dehalococcoides mccartyi (strain ATCC BAA-2100 / JCM 16839 / KCTC 5957 / BAV1) protein is D-aminoacyl-tRNA deacylase.